The primary structure comprises 335 residues: UPF0353 protein MAP_1207 (335 aa).

A run of 2 helical transmembrane segments spans residues 18–38 (WFFL…LMQL) and 67–87 (LPAI…AGPT). The region spanning 98 to 294 (VVMLVIDVSQ…QELKSVYATL (197 aa)) is the VWFA domain. Residues 309 to 329 (VGWVRLGALVLALAALTALLI) traverse the membrane as a helical segment.

This sequence belongs to the UPF0353 family.

It localises to the cell membrane. This chain is UPF0353 protein MAP_1207, found in Mycolicibacterium paratuberculosis (strain ATCC BAA-968 / K-10) (Mycobacterium paratuberculosis).